A 328-amino-acid chain; its full sequence is Cysteine proteinase COT44 (328 aa).

The propeptide at 1–99 (MSIYLRWSLE…KYSAAVNVDE (99 aa)) is activation peptide. Asparagine 48 and asparagine 60 each carry an N-linked (GlcNAc...) asparagine glycan. 3 cysteine pairs are disulfide-bonded: cysteine 121/cysteine 163, cysteine 155/cysteine 196, and cysteine 254/cysteine 305. Cysteine 124 is a catalytic residue. Active-site residues include histidine 260 and asparagine 280.

Belongs to the peptidase C1 family. In terms of tissue distribution, present in both cotyledons and axes.

May function in an early event in cortical cell differentiation. The polypeptide is Cysteine proteinase COT44 (Brassica napus (Rape)).